A 175-amino-acid chain; its full sequence is Phosphopantetheine adenylyltransferase (175 aa).

Ser-10 is a substrate binding site. ATP-binding positions include 10-11 (SF) and His-18. Lys-42, Leu-74, and Arg-88 together coordinate substrate. ATP is bound by residues 89–91 (GMR), Glu-99, and 124–130 (WIFTSSS).

Belongs to the bacterial CoaD family. As to quaternary structure, homohexamer. It depends on Mg(2+) as a cofactor.

The protein resides in the cytoplasm. It catalyses the reaction (R)-4'-phosphopantetheine + ATP + H(+) = 3'-dephospho-CoA + diphosphate. It functions in the pathway cofactor biosynthesis; coenzyme A biosynthesis; CoA from (R)-pantothenate: step 4/5. Its function is as follows. Reversibly transfers an adenylyl group from ATP to 4'-phosphopantetheine, yielding dephospho-CoA (dPCoA) and pyrophosphate. This Desulfatibacillum aliphaticivorans protein is Phosphopantetheine adenylyltransferase.